The sequence spans 336 residues: Cytosolic 5'-nucleotidase 3A (336 aa).

Asp-88 functions as the Nucleophile in the catalytic mechanism. The Mg(2+) site is built by Asp-88 and Asp-90. Asp-90 serves as the catalytic Proton donor. Residue Glu-135 coordinates CMP. N(7)-methyl-GMP-binding residues include Glu-135 and Ser-156. Substrate contacts are provided by residues 203 to 204 (SA) and Lys-252. Asp-277 contacts Mg(2+). Residue Ser-278 is modified to Phosphoserine.

This sequence belongs to the pyrimidine 5'-nucleotidase family. In terms of assembly, monomer. In terms of tissue distribution, isoforms 1, 3 and 4 are expressed in reticulocytes. Isoform 4 is hardly detectable in bone marrow and fetal liver.

It localises to the cytoplasm. It is found in the endoplasmic reticulum. It carries out the reaction N(7)-methyl-GMP + H2O = N(7)-methylguanosine + phosphate. It catalyses the reaction CMP + H2O = cytidine + phosphate. The catalysed reaction is a ribonucleoside 5'-phosphate + H2O = a ribonucleoside + phosphate. Functionally, nucleotidase which shows specific activity towards cytidine monophosphate (CMP) and 7-methylguanosine monophosphate (m(7)GMP). CMP seems to be the preferred substrate. This is Cytosolic 5'-nucleotidase 3A (NT5C3A) from Homo sapiens (Human).